Reading from the N-terminus, the 89-residue chain is Small ribosomal subunit protein uS15 (89 aa).

Residues Met-1–Pro-25 form a disordered region.

Belongs to the universal ribosomal protein uS15 family. In terms of assembly, part of the 30S ribosomal subunit. Forms a bridge to the 50S subunit in the 70S ribosome, contacting the 23S rRNA.

In terms of biological role, one of the primary rRNA binding proteins, it binds directly to 16S rRNA where it helps nucleate assembly of the platform of the 30S subunit by binding and bridging several RNA helices of the 16S rRNA. Its function is as follows. Forms an intersubunit bridge (bridge B4) with the 23S rRNA of the 50S subunit in the ribosome. In Alkalilimnicola ehrlichii (strain ATCC BAA-1101 / DSM 17681 / MLHE-1), this protein is Small ribosomal subunit protein uS15.